The primary structure comprises 140 residues: Nucleoside diphosphate kinase (140 aa).

ATP-binding residues include lysine 11, phenylalanine 59, arginine 87, threonine 93, arginine 104, and asparagine 114. Residue histidine 117 is the Pros-phosphohistidine intermediate of the active site.

This sequence belongs to the NDK family. In terms of assembly, homotetramer. The cofactor is Mg(2+).

It localises to the cytoplasm. The catalysed reaction is a 2'-deoxyribonucleoside 5'-diphosphate + ATP = a 2'-deoxyribonucleoside 5'-triphosphate + ADP. It catalyses the reaction a ribonucleoside 5'-diphosphate + ATP = a ribonucleoside 5'-triphosphate + ADP. Major role in the synthesis of nucleoside triphosphates other than ATP. The ATP gamma phosphate is transferred to the NDP beta phosphate via a ping-pong mechanism, using a phosphorylated active-site intermediate. The polypeptide is Nucleoside diphosphate kinase (Rhodopseudomonas palustris (strain HaA2)).